A 245-amino-acid polypeptide reads, in one-letter code: Demethylmenaquinone methyltransferase (245 aa).

Residues Thr-69, Asp-90, and 118-119 contribute to the S-adenosyl-L-methionine site; that span reads DC.

The protein belongs to the class I-like SAM-binding methyltransferase superfamily. MenG/UbiE family.

It carries out the reaction a 2-demethylmenaquinol + S-adenosyl-L-methionine = a menaquinol + S-adenosyl-L-homocysteine + H(+). It participates in quinol/quinone metabolism; menaquinone biosynthesis; menaquinol from 1,4-dihydroxy-2-naphthoate: step 2/2. In terms of biological role, methyltransferase required for the conversion of demethylmenaquinol (DMKH2) to menaquinol (MKH2). This Porphyromonas gingivalis (strain ATCC 33277 / DSM 20709 / CIP 103683 / JCM 12257 / NCTC 11834 / 2561) protein is Demethylmenaquinone methyltransferase.